Reading from the N-terminus, the 283-residue chain is SNAP25 homologous protein SNAP32 (283 aa).

Disordered stretches follow at residues 1–64 (MSGR…AAAR) and 192–212 (LGLS…EPTS). Polar residues predominate over residues 198-212 (PPQSNARQFHSEPTS). The region spanning 218–280 (EMEKAKQDDG…KGANTRARRL (63 aa)) is the t-SNARE coiled-coil homology domain.

This sequence belongs to the SNAP-25 family. As to quaternary structure, interacts with SYP121. In terms of tissue distribution, expressed in roots, culms and leaves.

The protein resides in the membrane. T-SNARE involved in diverse vesicle trafficking and membrane fusion processes. May be involved in resistance to the rice blast fungus Magnaporthe oryzae. May contribute to host resistance to rice blast through interaction with SYP121. The protein is SNAP25 homologous protein SNAP32 of Oryza sativa subsp. japonica (Rice).